A 73-amino-acid polypeptide reads, in one-letter code: Translation initiation factor IF-1 (73 aa).

The 73-residue stretch at 1-73 (MAKKDGVIEI…NRGRIVYRYR (73 aa)) folds into the S1-like domain.

It belongs to the IF-1 family. In terms of assembly, component of the 30S ribosomal translation pre-initiation complex which assembles on the 30S ribosome in the order IF-2 and IF-3, IF-1 and N-formylmethionyl-tRNA(fMet); mRNA recruitment can occur at any time during PIC assembly.

The protein localises to the cytoplasm. Functionally, one of the essential components for the initiation of protein synthesis. Stabilizes the binding of IF-2 and IF-3 on the 30S subunit to which N-formylmethionyl-tRNA(fMet) subsequently binds. Helps modulate mRNA selection, yielding the 30S pre-initiation complex (PIC). Upon addition of the 50S ribosomal subunit IF-1, IF-2 and IF-3 are released leaving the mature 70S translation initiation complex. The sequence is that of Translation initiation factor IF-1 from Acidothermus cellulolyticus (strain ATCC 43068 / DSM 8971 / 11B).